The chain runs to 449 residues: Biotin carboxylase (449 aa).

Positions 4-448 constitute a Biotin carboxylation domain; that stretch reads MIEKVLIANR…NIHYLEKMLG (445 aa). ATP-binding positions include lysine 119, lysine 162, 168 to 169, 204 to 207, histidine 212, and histidine 239; these read GG and EKYL. The 198-residue stretch at 123–320 folds into the ATP-grasp domain; the sequence is IAAMKAAGVP…IVKEQILIAA (198 aa). Lysine 241 lines the hydrogencarbonate pocket. Positions 279 and 291 each coordinate ATP. Positions 279, 291, and 293 each coordinate Mg(2+). Residues glutamate 279, glutamate 291, and asparagine 293 each coordinate Mn(2+). 3 residues coordinate hydrogencarbonate: arginine 295, valine 298, and arginine 341. Residue arginine 295 is part of the active site. Arginine 341 contacts biotin.

Acetyl-CoA carboxylase is a heterohexamer of biotin carboxyl carrier protein, biotin carboxylase and the two subunits of carboxyl transferase in a 2:2 complex. The cofactor is Mg(2+). It depends on Mn(2+) as a cofactor.

The catalysed reaction is N(6)-biotinyl-L-lysyl-[protein] + hydrogencarbonate + ATP = N(6)-carboxybiotinyl-L-lysyl-[protein] + ADP + phosphate + H(+). Its pathway is lipid metabolism; malonyl-CoA biosynthesis; malonyl-CoA from acetyl-CoA: step 1/1. This protein is a component of the acetyl coenzyme A carboxylase complex; first, biotin carboxylase catalyzes the carboxylation of the carrier protein and then the transcarboxylase transfers the carboxyl group to form malonyl-CoA. The polypeptide is Biotin carboxylase (accC) (Allochromatium vinosum (strain ATCC 17899 / DSM 180 / NBRC 103801 / NCIMB 10441 / D) (Chromatium vinosum)).